A 173-amino-acid chain; its full sequence is Mediator of RNA polymerase II transcription subunit 10 (173 aa).

The span at 1–20 shows a compositional bias: polar residues; it reads MDPNSPMFQNTPQQPMSLQR. Positions 1-45 are disordered; it reads MDPNSPMFQNTPQQPMSLQRSVDDRIDRERTAKKEKDDEKKKQED. A compositionally biased stretch (basic and acidic residues) spans 21–45; that stretch reads SVDDRIDRERTAKKEKDDEKKKQED.

The protein belongs to the Mediator complex subunit 10 family. In terms of assembly, component of the Mediator complex.

It localises to the nucleus. Functionally, component of the Mediator complex, a coactivator involved in the regulated transcription of nearly all RNA polymerase II-dependent genes. Mediator functions as a bridge to convey information from gene-specific regulatory proteins to the basal RNA polymerase II transcription machinery. Mediator is recruited to promoters by direct interactions with regulatory proteins and serves as a scaffold for the assembly of a functional preinitiation complex with RNA polymerase II and the general transcription factors. The chain is Mediator of RNA polymerase II transcription subunit 10 (mdt-10) from Caenorhabditis briggsae.